The primary structure comprises 140 residues: Large ribosomal subunit protein uL22 (140 aa).

The interval 115–140 (AKPAAAKKDPKAAAAKADANAGTKEG) is disordered.

It belongs to the universal ribosomal protein uL22 family. As to quaternary structure, part of the 50S ribosomal subunit.

This protein binds specifically to 23S rRNA; its binding is stimulated by other ribosomal proteins, e.g. L4, L17, and L20. It is important during the early stages of 50S assembly. It makes multiple contacts with different domains of the 23S rRNA in the assembled 50S subunit and ribosome. Its function is as follows. The globular domain of the protein is located near the polypeptide exit tunnel on the outside of the subunit, while an extended beta-hairpin is found that lines the wall of the exit tunnel in the center of the 70S ribosome. The sequence is that of Large ribosomal subunit protein uL22 from Heliobacterium modesticaldum (strain ATCC 51547 / Ice1).